The following is a 553-amino-acid chain: Urocanate hydratase (553 aa).

NAD(+)-binding positions include 45-46, Q123, 169-171, D189, R194, 235-236, 256-260, 266-267, Y315, and G485; these read GG, GMG, NA, QTSAH, and YV.

It belongs to the urocanase family. The cofactor is NAD(+).

The protein resides in the cytoplasm. It catalyses the reaction 4-imidazolone-5-propanoate = trans-urocanate + H2O. Its pathway is amino-acid degradation; L-histidine degradation into L-glutamate; N-formimidoyl-L-glutamate from L-histidine: step 2/3. Its function is as follows. Catalyzes the conversion of urocanate to 4-imidazolone-5-propionate. This chain is Urocanate hydratase, found in Staphylococcus saprophyticus subsp. saprophyticus (strain ATCC 15305 / DSM 20229 / NCIMB 8711 / NCTC 7292 / S-41).